Here is a 242-residue protein sequence, read N- to C-terminus: Serine hydrolase cnsH (242 aa).

Catalysis depends on charge relay system residues Ser56, Asp138, and His216.

This sequence belongs to the AB hydrolase 3 family.

The protein operates within alkaloid biosynthesis. Serine hydrolase; part of the gene cluster that mediates the biosynthesis of communesins, a prominent class of indole alkaloids with great potential as pharmaceuticals. Communesins are biosynthesized by the coupling of tryptamine and aurantioclavine, two building blocks derived from L-tryptophan. The L-tryptophan decarboxylase cnsB converts L-tryptophan to tryptamine, whereas the tryptophan dimethylallyltransferase cnsF converts L-tryptophan to 4-dimethylallyl tryptophan which is further transformed to aurantioclavine by the aurantioclavine synthase cnsA, probably aided by the catalase cnsD. The cytochrome P450 monooxygenase cnsC catalyzes the heterodimeric coupling between the two different indole moieties, tryptamine and aurantioclavine, to construct vicinal quaternary stereocenters and yield the heptacyclic communesin scaffold. The O-methyltransferase cnsE then methylates the communesin scaffold to produce communesin K, the simplest characterized communesin that contains the heptacyclic core. The dioxygenase cnsJ converts communesin K into communesin I. Acylation to introduce the hexadienyl group at position N16 of communesin I by the acyltransferase cnsK leads to the production of communesin B. The hexadienyl group is produced by the highly reducing polyketide synthase cnsI, before being hydrolytically removed from cnsI by the serine hydrolase cnsH, converted into hexadienyl-CoA by the CoA ligase cnsG, and then transferred to communesin I by cnsK. Surprisingly, cnsK may also be a promiscuous acyltransferase that can tolerate a range of acyl groups, including acetyl-, propionyl-, and butyryl-CoA, which lead to communesins A, G and H respectively. The roles of the alpha-ketoglutarate-dependent dioxygenases cnsM and cnsP have still to be determined. This chain is Serine hydrolase cnsH, found in Penicillium expansum (Blue mold rot fungus).